The following is a 163-amino-acid chain: NADPH-dependent 7-cyano-7-deazaguanine reductase (163 aa).

Cys54 functions as the Thioimide intermediate in the catalytic mechanism. Catalysis depends on Asp61, which acts as the Proton donor. Substrate-binding positions include 76–78 and 95–96; these read VES and HE.

This sequence belongs to the GTP cyclohydrolase I family. QueF type 1 subfamily.

It is found in the cytoplasm. The enzyme catalyses 7-aminomethyl-7-carbaguanine + 2 NADP(+) = 7-cyano-7-deazaguanine + 2 NADPH + 3 H(+). It participates in tRNA modification; tRNA-queuosine biosynthesis. Functionally, catalyzes the NADPH-dependent reduction of 7-cyano-7-deazaguanine (preQ0) to 7-aminomethyl-7-deazaguanine (preQ1). This Streptococcus thermophilus (strain CNRZ 1066) protein is NADPH-dependent 7-cyano-7-deazaguanine reductase.